We begin with the raw amino-acid sequence, 201 residues long: Recombination protein RecR (201 aa).

The C4-type zinc-finger motif lies at 59 to 74 (CEICGNMDTENMCRIC). Residues 82-177 (SIIAIVETVA…KISRLASGIP (96 aa)) enclose the Toprim domain.

It belongs to the RecR family.

Functionally, may play a role in DNA repair. It seems to be involved in an RecBC-independent recombinational process of DNA repair. It may act with RecF and RecO. The sequence is that of Recombination protein RecR from Rickettsia conorii (strain ATCC VR-613 / Malish 7).